We begin with the raw amino-acid sequence, 410 residues long: E3 ubiquitin-protein ligase MARCHF4 (410 aa).

The signal sequence occupies residues 1–18; sequence MLMPLCGLLWWWWCCCSG. The interval 92–136 is disordered; that stretch reads GPREVVGREPPPVPPPPPLPPSSVEDDWGGPATEPPASLLSSASS. Positions 100 to 112 are enriched in pro residues; the sequence is EPPPVPPPPPLPP. Residues 126–136 show a composition bias toward low complexity; it reads PPASLLSSASS. The RING-CH-type zinc-finger motif lies at 155–215; sequence DSGMRTPLCR…ELCYYKYHVI (61 aa). Residues Cys163, Cys166, Cys179, Cys181, His189, Cys192, Cys205, and Cys208 each coordinate Zn(2+). A run of 2 helical transmembrane segments spans residues 238-258 and 272-292; these read VAAA…LIWS and LFQI…GLII. Disordered regions lie at residues 324–372 and 390–410; these read EDQK…SGPL and PHEQ…VTTV. Over residues 333 to 346 the composition is skewed to polar residues; sequence NPRTSSSTQANIPS. Positions 352–366 are enriched in low complexity; that stretch reads AGTPAPEQGPAQAAG.

As to expression, expressed in brain and placenta.

Its subcellular location is the golgi apparatus membrane. It catalyses the reaction S-ubiquitinyl-[E2 ubiquitin-conjugating enzyme]-L-cysteine + [acceptor protein]-L-lysine = [E2 ubiquitin-conjugating enzyme]-L-cysteine + N(6)-ubiquitinyl-[acceptor protein]-L-lysine.. Its pathway is protein modification; protein ubiquitination. Its function is as follows. E3 ubiquitin-protein ligase that may mediate ubiquitination of MHC-I and CD4, and promote their subsequent endocytosis and sorting to lysosomes via multivesicular bodies. E3 ubiquitin ligases accept ubiquitin from an E2 ubiquitin-conjugating enzyme in the form of a thioester and then directly transfer the ubiquitin to targeted substrates. The sequence is that of E3 ubiquitin-protein ligase MARCHF4 from Homo sapiens (Human).